A 504-amino-acid chain; its full sequence is Maturase K (504 aa).

This sequence belongs to the intron maturase 2 family. MatK subfamily.

It localises to the plastid. It is found in the chloroplast. Its function is as follows. Usually encoded in the trnK tRNA gene intron. Probably assists in splicing its own and other chloroplast group II introns. This Turritis glabra (Tower mustard) protein is Maturase K.